Here is a 96-residue protein sequence, read N- to C-terminus: DNA-directed RNA polymerase subunit Rpo11 (96 aa).

It belongs to the archaeal Rpo11/eukaryotic RPB11/RPC19 RNA polymerase subunit family. In terms of assembly, part of the RNA polymerase complex.

It is found in the cytoplasm. The catalysed reaction is RNA(n) + a ribonucleoside 5'-triphosphate = RNA(n+1) + diphosphate. Its function is as follows. DNA-dependent RNA polymerase (RNAP) catalyzes the transcription of DNA into RNA using the four ribonucleoside triphosphates as substrates. This chain is DNA-directed RNA polymerase subunit Rpo11, found in Haloquadratum walsbyi (strain DSM 16790 / HBSQ001).